We begin with the raw amino-acid sequence, 549 residues long: Probable protein kinase UbiB (549 aa).

Positions 123-501 (DFDNTPLASA…QQKAHKSNYL (379 aa)) constitute a Protein kinase domain. ATP-binding positions include 129-137 (LASASISQV) and K152. D287 serves as the catalytic Proton acceptor. 2 helical membrane passes run 498-518 (SNYL…LFNQ) and 520-540 (ATLW…LLGW).

It belongs to the ABC1 family. UbiB subfamily.

It localises to the cell inner membrane. It functions in the pathway cofactor biosynthesis; ubiquinone biosynthesis [regulation]. Functionally, is probably a protein kinase regulator of UbiI activity which is involved in aerobic coenzyme Q (ubiquinone) biosynthesis. The polypeptide is Probable protein kinase UbiB (Shewanella woodyi (strain ATCC 51908 / MS32)).